The following is a 651-amino-acid chain: p-hydroxybenzoic acid efflux pump subunit AaeB (651 aa).

A run of 11 helical transmembrane segments spans residues 11 to 31, 41 to 61, 67 to 87, 91 to 111, 119 to 139, 150 to 170, 368 to 388, 405 to 425, 429 to 449, 460 to 480, and 481 to 501; these read FAFK…HLQL, AAIV…SGAI, LRII…VLTI, VLTL…SSLV, FGLA…TPLL, EIVL…PRSI, LFWL…IAVV, FLLG…FIIP, QSML…GIEV, LAST…VSLF, and LDSA…LLLI.

Belongs to the aromatic acid exporter ArAE (TC 2.A.85) family.

Its subcellular location is the cell inner membrane. Functionally, forms an efflux pump with AaeA. Could function as a metabolic relief valve, allowing to eliminate certain compounds when they accumulate to high levels in the cell. The chain is p-hydroxybenzoic acid efflux pump subunit AaeB from Yersinia enterocolitica serotype O:8 / biotype 1B (strain NCTC 13174 / 8081).